Consider the following 1316-residue polypeptide: DNA-directed RNA polymerase subunit beta' (1316 aa).

The Zn(2+) site is built by cysteine 60, cysteine 62, cysteine 75, and cysteine 78. Mg(2+) is bound by residues aspartate 535, aspartate 537, and aspartate 539. Zn(2+) contacts are provided by cysteine 891, cysteine 968, cysteine 975, and cysteine 978.

This sequence belongs to the RNA polymerase beta' chain family. The RNAP catalytic core consists of 2 alpha, 1 beta, 1 beta' and 1 omega subunit. When a sigma factor is associated with the core the holoenzyme is formed, which can initiate transcription. Mg(2+) serves as cofactor. Zn(2+) is required as a cofactor.

It catalyses the reaction RNA(n) + a ribonucleoside 5'-triphosphate = RNA(n+1) + diphosphate. In terms of biological role, DNA-dependent RNA polymerase catalyzes the transcription of DNA into RNA using the four ribonucleoside triphosphates as substrates. This is DNA-directed RNA polymerase subunit beta' from Mycobacterium ulcerans (strain Agy99).